The primary structure comprises 285 residues: AT-hook motif nuclear-localized protein 21 (285 aa).

Positions 17-95 are disordered; sequence DGGGGGQFTT…GSKNKPKPPV (79 aa). The span at 39 to 50 shows a compositional bias: basic residues; sequence NHHHHHHNHNHH. The segment covering 63–73 has biased composition (gly residues); it reads GLGGGGGGGSG. The a.T hook DNA-binding region spans 78–90; the sequence is RRPRGRPAGSKNK. A PPC domain is found at 102–238; the sequence is ANTLRAHILE…EHEEHLQSGG (137 aa).

In terms of tissue distribution, preferentially expressed in roots, but also in flowers and leaves. Detected in the inflorescence meristem, floral primordia and developing reproductive organs.

The protein resides in the nucleus. It localises to the nucleoplasm. In terms of biological role, transcription factor that specifically binds AT-rich DNA sequences related to the nuclear matrix attachment regions (MARs). Binds to the MARs present in the ETTIN (ETT) promoter leading to a negative regulation of its gene expression. Functions as a molecular node downstream of the homeotic protein AGAMOUS (AG), regulating patterning and differentiation of reproductive organs. Acts as a chromatin remodeling factor that modifies the architecture of ETTIN (ETT) chromatin by modulating H3 methylation leading to the regulation of ETT expression. Seems to be involved in the regulation of a set of reproductives genes including CRABS CLAW (CRC), JAGGED (JAG) and KNUCKLES (KNU). The polypeptide is AT-hook motif nuclear-localized protein 21 (Arabidopsis thaliana (Mouse-ear cress)).